Reading from the N-terminus, the 192-residue chain is Ras-like protein RAS2 (192 aa).

A GTP-binding site is contributed by 15-22 (GGGGVGKS). Residues 37–45 (YDPTIEDSY) carry the Effector region motif. Residues 62–66 (DTAGQ) and 121–124 (NKSD) each bind GTP. Cys-189 bears the Cysteine methyl ester mark. Cys-189 carries S-geranylgeranyl cysteine lipidation. Positions 190 to 192 (IVL) are cleaved as a propeptide — removed in mature form.

This sequence belongs to the small GTPase superfamily. Ras family.

It is found in the cell membrane. It carries out the reaction GTP + H2O = GDP + phosphate + H(+). Its activity is regulated as follows. Alternates between an inactive form bound to GDP and an active form bound to GTP. Activated by a guanine nucleotide-exchange factor (GEF) and inactivated by a GTPase-activating protein (GAP). Ras proteins bind GDP/GTP and possess intrinsic GTPase activity. The polypeptide is Ras-like protein RAS2 (RAS2) (Hydra vulgaris (Hydra)).